Reading from the N-terminus, the 106-residue chain is Guanyl-specific ribonuclease Th1 (106 aa).

2 cysteine pairs are disulfide-bonded: cysteine 5-cysteine 103 and cysteine 23-cysteine 84. Histidine 39 is a catalytic residue. The active-site Proton acceptor is glutamate 58. Catalysis depends on histidine 92, which acts as the Proton donor.

This sequence belongs to the ribonuclease N1/T1 family.

The enzyme catalyses [RNA] containing guanosine + H2O = an [RNA fragment]-3'-guanosine-3'-phosphate + a 5'-hydroxy-ribonucleotide-3'-[RNA fragment].. The protein is Guanyl-specific ribonuclease Th1 of Trichoderma harzianum (Hypocrea lixii).